The chain runs to 153 residues: NAD(P)H-quinone oxidoreductase subunit N (153 aa).

Belongs to the complex I NdhN subunit family. In terms of assembly, NDH-1 can be composed of about 15 different subunits; different subcomplexes with different compositions have been identified which probably have different functions.

It localises to the cellular thylakoid membrane. The enzyme catalyses a plastoquinone + NADH + (n+1) H(+)(in) = a plastoquinol + NAD(+) + n H(+)(out). The catalysed reaction is a plastoquinone + NADPH + (n+1) H(+)(in) = a plastoquinol + NADP(+) + n H(+)(out). In terms of biological role, NDH-1 shuttles electrons from an unknown electron donor, via FMN and iron-sulfur (Fe-S) centers, to quinones in the respiratory and/or the photosynthetic chain. The immediate electron acceptor for the enzyme in this species is believed to be plastoquinone. Couples the redox reaction to proton translocation, and thus conserves the redox energy in a proton gradient. Cyanobacterial NDH-1 also plays a role in inorganic carbon-concentration. This is NAD(P)H-quinone oxidoreductase subunit N from Prochlorococcus marinus (strain MIT 9313).